Consider the following 521-residue polypeptide: Probable protein kinase UbiB (521 aa).

In terms of domain architecture, Protein kinase spans 119-497 (SFDRQPVASA…QKRTNRLLQS (379 aa)). ATP contacts are provided by residues 125–133 (VASASIAQV) and lysine 151. The Proton acceptor role is filled by aspartate 286. The chain crosses the membrane as a helical span at residues 496-516 (QSLIYGGLGFVLGLLVMQLFV).

It belongs to the ABC1 family. UbiB subfamily.

The protein resides in the cell inner membrane. It functions in the pathway cofactor biosynthesis; ubiquinone biosynthesis [regulation]. In terms of biological role, is probably a protein kinase regulator of UbiI activity which is involved in aerobic coenzyme Q (ubiquinone) biosynthesis. The polypeptide is Probable protein kinase UbiB (Acidovorax sp. (strain JS42)).